The sequence spans 315 residues: MTTMQLDSDGRLRHLLTLEGLPRATLLQLLDRAGQIRDAAVGRVGKRSVLAGTAVCTLFFEPSTRTRSSFHLAAQRLGADVLNFDASTSSTRKGETARDTLKNLEAMGVRGFVVRHPEDGAVERLAEAAGEGTALINAGDGRSAHPTQGLLDMLTLRQAKGTDFSKLKVVIVGDVKHSRVARSDLHALRTLGAGEIRVCGPASLLPDDDMLDGCVVGEDFDAMLEGADALMMLRLQRERMEEGLVPSLEQYHADYGLTRERLARAGRDAAVLHPGPINRGVEITDEVADGAQSCVLRQVANGVAVRMAVLETLLG.

Carbamoyl phosphate contacts are provided by Arg65 and Thr66. Position 93 (Lys93) interacts with L-aspartate. Residues Arg115, His145, and Gln148 each coordinate carbamoyl phosphate. L-aspartate is bound by residues Arg179 and Arg234. Positions 275 and 276 each coordinate carbamoyl phosphate.

It belongs to the aspartate/ornithine carbamoyltransferase superfamily. ATCase family. Heterododecamer (2C3:3R2) of six catalytic PyrB chains organized as two trimers (C3), and six regulatory PyrI chains organized as three dimers (R2).

It carries out the reaction carbamoyl phosphate + L-aspartate = N-carbamoyl-L-aspartate + phosphate + H(+). The protein operates within pyrimidine metabolism; UMP biosynthesis via de novo pathway; (S)-dihydroorotate from bicarbonate: step 2/3. Its function is as follows. Catalyzes the condensation of carbamoyl phosphate and aspartate to form carbamoyl aspartate and inorganic phosphate, the committed step in the de novo pyrimidine nucleotide biosynthesis pathway. This chain is Aspartate carbamoyltransferase catalytic subunit, found in Xanthomonas campestris pv. campestris (strain 8004).